The following is a 429-amino-acid chain: MPAIVIVGAQWGDEGKGKATDLLGGRVDYVVKPNGGNNAGHTVVVGGEKYELKLLPAGILSPNAVPIIGNGCVVNLEALFQEIDGLEARGADTSKLRVSANAHLVAPYHQVLDKVTERFLGSRAIGTTGRGIGPAYMDKVARLGIRVQDVFDASILRQKVEGSLRQKNELLVKVYNRRDIEVDEIVDYFLSFAERLRPLVIDSTYVLNTALDEGKVVLMEGGQATFLDVDHGTYPFVTSSNPTAGGASVGSGIGPTRISRSIGIIKAYTTRVGAGPFPTELFDEMGMYLQKTGGEFGVNTGRPRRCGWYDAVLARHASRVNGFTDYFVTKLDVLTGIEQIPVCVAYDVDGVRHDEMPMTQTEFHHAKPIFEYFEGWTEDITGARTLEDLPENAKNYVLALEKLSGTRFSAIGVGPDRDQTIVVNDLIND.

Residues 12–18 (GDEGKGK) and 40–42 (GHT) contribute to the GTP site. Asp13 functions as the Proton acceptor in the catalytic mechanism. 2 residues coordinate Mg(2+): Asp13 and Gly40. Residues 13 to 16 (DEGK), 38 to 41 (NAGH), Thr128, Arg142, Gln223, Thr238, and Arg302 each bind IMP. His41 (proton donor) is an active-site residue. 298-304 (VNTGRPR) contacts substrate. GTP is bound by residues Arg304, 330 to 332 (KLD), and 412 to 414 (GVG).

It belongs to the adenylosuccinate synthetase family. Homodimer. Requires Mg(2+) as cofactor.

The protein localises to the cytoplasm. It carries out the reaction IMP + L-aspartate + GTP = N(6)-(1,2-dicarboxyethyl)-AMP + GDP + phosphate + 2 H(+). Its pathway is purine metabolism; AMP biosynthesis via de novo pathway; AMP from IMP: step 1/2. Plays an important role in the de novo pathway of purine nucleotide biosynthesis. Catalyzes the first committed step in the biosynthesis of AMP from IMP. The sequence is that of Adenylosuccinate synthetase from Arthrobacter sp. (strain FB24).